A 1406-amino-acid chain; its full sequence is DNA topoisomerase 2 (1406 aa).

ATP contacts are provided by residues Asn69, Asn98, 126-128 (SSN), and 139-146 (GRNGYGAK). The interval 332–334 (KKK) is interaction with DNA. 363–365 (QTK) contributes to the ATP binding site. The region spanning 441-555 (CTLILTEGDS…GLLDIPGFLI (115 aa)) is the Toprim domain. Mg(2+)-binding residues include Glu447, Asp524, and Asp526. The Topo IIA-type catalytic domain occupies 690-1159 (IPSVLDGFKP…SAKDLWNNDL (470 aa)). Catalysis depends on Tyr780, which acts as the O-(5'-phospho-DNA)-tyrosine intermediate. The interval 963-972 (KLISPISLQN) is interaction with DNA. A compositionally biased stretch (acidic residues) spans 1079–1089 (EDEDEDLEESE). 4 disordered regions span residues 1079–1106 (EDED…VNGP), 1183–1215 (KTKG…KKIK), 1230–1287 (KIKA…DESG), and 1303–1406 (DEDA…FNDE). The span at 1090–1100 (EATRKKDKDDE) shows a compositional bias: basic and acidic residues. The segment covering 1204 to 1214 (KKKPARRIKKI) has biased composition (basic residues). Residues 1261 to 1274 (DVTSNASTPSTTIF) are compositionally biased toward polar residues. Over residues 1326–1336 (AKKKAPPKRKA) the composition is skewed to basic residues. 2 stretches are compositionally biased toward acidic residues: residues 1341 to 1359 (SSED…DEEV) and 1381 to 1406 (EISD…FNDE).

Belongs to the type II topoisomerase family. As to quaternary structure, homodimer. It depends on Mg(2+) as a cofactor. Requires Mn(2+) as cofactor. Ca(2+) is required as a cofactor.

It localises to the nucleus. It carries out the reaction ATP-dependent breakage, passage and rejoining of double-stranded DNA.. Functionally, control of topological states of DNA by transient breakage and subsequent rejoining of DNA strands. Topoisomerase II makes double-strand breaks. The protein is DNA topoisomerase 2 (TOP2) of Candida glabrata (strain ATCC 2001 / BCRC 20586 / JCM 3761 / NBRC 0622 / NRRL Y-65 / CBS 138) (Yeast).